The following is a 108-amino-acid chain: uncharacterized protein (108 aa).

The signal sequence occupies residues 1 to 20 (MNLKSIIFVLFIAFFAFSLA). N39 carries an N-linked (GlcNAc...) asparagine glycan.

This sequence belongs to the Dictyostelium gerABC family.

The protein resides in the secreted. This is an uncharacterized protein from Dictyostelium discoideum (Social amoeba).